Here is a 438-residue protein sequence, read N- to C-terminus: GTPase Der (438 aa).

EngA-type G domains are found at residues 4–168 and 176–351; these read PIVA…PAVP and LKVA…EAAN. Residues 10 to 17, 57 to 61, 120 to 123, 182 to 189, 229 to 233, and 294 to 297 contribute to the GTP site; these read GRPNVGKS, DTGGI, NKVE, DTAGM, and NKWD. The 85-residue stretch at 352–436 folds into the KH-like domain; sequence RRVATGTLNA…PIRLIFRRGR (85 aa).

It belongs to the TRAFAC class TrmE-Era-EngA-EngB-Septin-like GTPase superfamily. EngA (Der) GTPase family. In terms of assembly, associates with the 50S ribosomal subunit.

In terms of biological role, GTPase that plays an essential role in the late steps of ribosome biogenesis. The protein is GTPase Der of Moorella thermoacetica (strain ATCC 39073 / JCM 9320).